A 1558-amino-acid chain; its full sequence is Calmodulin-regulated spectrin-associated protein 1-B (1558 aa).

Positions 231–346 (WYWKLVPVRY…FIAELFWWFE (116 aa)) constitute a Calponin-homology (CH) domain. Composition is skewed to polar residues over residues 400-417 (VQNS…SGFS), 440-450 (ACRNRSNSLTQ), and 504-516 (ASTV…SHPG). Disordered stretches follow at residues 400–464 (VQNS…SDKR), 504–523 (ASTV…VRRI), 551–585 (NDIT…SDSR), 602–675 (AKEK…APGQ), 737–790 (TKEL…VASG), 803–850 (QRFG…QNKD), and 943–968 (DRSK…SSSP). Positions 602–620 (AKEKSISLNKEEESGEGRQ) are enriched in basic and acidic residues. Polar residues predominate over residues 643-658 (QTLNRTFTPNTSSEFE). Residues 737 to 772 (TKELHPDKKQHFEEEVESAKLREDMNVKEHEDKDGG) are compositionally biased toward basic and acidic residues. 2 stretches are compositionally biased toward low complexity: residues 776-790 (SSPG…VASG) and 812-822 (RSSTSSSQRTT). Positions 849 to 887 (KDNANMLASELVQLHMQLEEKRRAIESQKKKMEILTARQ) form a coiled coil. A compositionally biased stretch (basic and acidic residues) spans 943-955 (DRSKEAEEPEKAS). Positions 971 to 1004 (VEEEVDLNECNRSIELLNEAIGSIQQQMMQLSLQ) form a coiled coil. Disordered stretches follow at residues 1041–1131 (FVEP…TFHL), 1257–1293 (LRKQ…RREL), 1305–1344 (ELCE…KCPA), and 1360–1414 (LASV…ITST). Low complexity predominate over residues 1080-1090 (SSTPTPTDSPS). The span at 1106–1115 (DFVQSSVRSE) shows a compositional bias: polar residues. Positions 1243–1303 (AFLLKQQRKA…IKQEYLRKKQ (61 aa)) form a coiled coil. The span at 1317–1328 (PKTKPKKQRLKS) shows a compositional bias: basic residues. Positions 1421–1555 (GPKLFKEPSA…QAKRPAGPKK (135 aa)) constitute a CKK domain.

This sequence belongs to the CAMSAP1 family.

It is found in the cytoplasm. The protein resides in the cytoskeleton. Its function is as follows. Key microtubule-organizing protein that specifically binds the minus-end of non-centrosomal microtubules and regulates their dynamics and organization. Specifically recognizes growing microtubule minus-ends and stabilizes microtubules. Acts on free microtubule minus-ends that are not capped by microtubule-nucleating proteins or other factors and protects microtubule minus-ends from depolymerization. In contrast to camsap2 and camsap3, tracks along the growing tips of minus-end microtubules without significantly affecting the polymerization rate: binds at the very tip of the microtubules minus-end and acts as a minus-end tracking protein (-TIP) that dissociates from microtubules after allowing tubulin incorporation. Through interaction with spectrin may regulate neurite outgrowth. The protein is Calmodulin-regulated spectrin-associated protein 1-B (camsap1b) of Danio rerio (Zebrafish).